Consider the following 347-residue polypeptide: Phosphoribosylformylglycinamidine cyclo-ligase (347 aa).

Belongs to the AIR synthase family.

It localises to the cytoplasm. It catalyses the reaction 2-formamido-N(1)-(5-O-phospho-beta-D-ribosyl)acetamidine + ATP = 5-amino-1-(5-phospho-beta-D-ribosyl)imidazole + ADP + phosphate + H(+). It functions in the pathway purine metabolism; IMP biosynthesis via de novo pathway; 5-amino-1-(5-phospho-D-ribosyl)imidazole from N(2)-formyl-N(1)-(5-phospho-D-ribosyl)glycinamide: step 2/2. The sequence is that of Phosphoribosylformylglycinamidine cyclo-ligase from Desulfatibacillum aliphaticivorans.